The chain runs to 225 residues: Phosphoglycolate phosphatase (225 aa).

Aspartate 11 (nucleophile) is an active-site residue. Mg(2+) contacts are provided by aspartate 11 and aspartate 13. Lysine 153 contacts substrate. 2 residues coordinate Mg(2+): aspartate 176 and aspartate 180.

This sequence belongs to the archaeal SPP-like hydrolase family. The cofactor is Mg(2+).

The enzyme catalyses 2-phosphoglycolate + H2O = glycolate + phosphate. Its function is as follows. Catalyzes the dephosphorylation of 2-phosphoglycolate. The sequence is that of Phosphoglycolate phosphatase from Halobacterium salinarum (strain ATCC 29341 / DSM 671 / R1).